Here is a 70-residue protein sequence, read N- to C-terminus: Translational regulator CsrA (70 aa).

This sequence belongs to the CsrA/RsmA family. In terms of assembly, homodimer; the beta-strands of each monomer intercalate to form a hydrophobic core, while the alpha-helices form wings that extend away from the core.

The protein localises to the cytoplasm. Its function is as follows. A translational regulator that binds mRNA to regulate translation initiation and/or mRNA stability. Usually binds in the 5'-UTR at or near the Shine-Dalgarno sequence preventing ribosome-binding, thus repressing translation. Its main target seems to be the major flagellin gene, while its function is anatagonized by FliW. This Clostridioides difficile (strain 630) (Peptoclostridium difficile) protein is Translational regulator CsrA.